A 205-amino-acid polypeptide reads, in one-letter code: Small ribosomal subunit protein uS4 (205 aa).

Positions Asn18 to Ser46 are disordered. The S4 RNA-binding domain occupies Arg94 to Gln157.

Belongs to the universal ribosomal protein uS4 family. In terms of assembly, part of the 30S ribosomal subunit. Contacts protein S5. The interaction surface between S4 and S5 is involved in control of translational fidelity.

In terms of biological role, one of the primary rRNA binding proteins, it binds directly to 16S rRNA where it nucleates assembly of the body of the 30S subunit. With S5 and S12 plays an important role in translational accuracy. The polypeptide is Small ribosomal subunit protein uS4 (Xanthobacter autotrophicus (strain ATCC BAA-1158 / Py2)).